A 178-amino-acid chain; its full sequence is uncharacterized protein (178 aa).

The disordered stretch occupies residues 152 to 178 (KKLKGAEPKEHQAPNFEPPTEIFPESN).

This sequence belongs to the EUO family.

This is an uncharacterized protein from Chlamydia pneumoniae (Chlamydophila pneumoniae).